Reading from the N-terminus, the 87-residue chain is Small ribosomal subunit protein uS17 (87 aa).

The protein belongs to the universal ribosomal protein uS17 family. Part of the 30S ribosomal subunit.

In terms of biological role, one of the primary rRNA binding proteins, it binds specifically to the 5'-end of 16S ribosomal RNA. This is Small ribosomal subunit protein uS17 from Geobacillus stearothermophilus (Bacillus stearothermophilus).